Reading from the N-terminus, the 654-residue chain is Macrolide export ATP-binding/permease protein MacB (654 aa).

The ABC transporter domain maps to 6–244; it reads IELRGLRREF…RAGDAPTRQP (239 aa). 42–49 serves as a coordination point for ATP; it reads GASGSGKS. 4 helical membrane passes run 278-298, 527-547, 584-604, and 619-639; these read FLTMLGIIIGIASVVFVVAVG, LTLMIAAIAVISLVVGGIGVM, VVCLIGGGLGVGVAFGLAALF, and SIAAAFVCSTGIGIVFGYLPA.

It belongs to the ABC transporter superfamily. Macrolide exporter (TC 3.A.1.122) family. As to quaternary structure, homodimer.

The protein resides in the cell inner membrane. Non-canonical ABC transporter that contains transmembrane domains (TMD), which form a pore in the inner membrane, and an ATP-binding domain (NBD), which is responsible for energy generation. Confers resistance against macrolides. In Rhodopseudomonas palustris (strain HaA2), this protein is Macrolide export ATP-binding/permease protein MacB.